The primary structure comprises 78 residues: DNA-directed RNA polymerase subunit omega (78 aa).

This sequence belongs to the RNA polymerase subunit omega family. As to quaternary structure, in cyanobacteria the RNAP catalytic core is composed of 2 alpha, 1 beta, 1 beta', 1 gamma and 1 omega subunit. When a sigma factor is associated with the core the holoenzyme is formed, which can initiate transcription.

It catalyses the reaction RNA(n) + a ribonucleoside 5'-triphosphate = RNA(n+1) + diphosphate. Its function is as follows. Promotes RNA polymerase assembly. Latches the N- and C-terminal regions of the beta' subunit thereby facilitating its interaction with the beta and alpha subunits. The sequence is that of DNA-directed RNA polymerase subunit omega from Prochlorococcus marinus (strain MIT 9515).